The primary structure comprises 250 residues: Glycerol-1-phosphate phosphohydrolase 2 (250 aa).

Asp18 functions as the Nucleophile in the catalytic mechanism. Residues Asp18 and Asp20 each contribute to the Mg(2+) site. Asp20 functions as the Proton donor in the catalytic mechanism. A Glycyl lysine isopeptide (Lys-Gly) (interchain with G-Cter in ubiquitin) cross-link involves residue Lys64. A Phosphoserine modification is found at Ser90. A Glycyl lysine isopeptide (Lys-Gly) (interchain with G-Cter in ubiquitin) cross-link involves residue Lys144. Asp179 contributes to the Mg(2+) binding site.

This sequence belongs to the HAD-like hydrolase superfamily. DOG/GPP family. In terms of assembly, monomer. The cofactor is Mg(2+).

It is found in the cytoplasm. It localises to the nucleus. It carries out the reaction sn-glycerol 1-phosphate + H2O = glycerol + phosphate. The enzyme catalyses sn-glycerol 3-phosphate + H2O = glycerol + phosphate. Functionally, glycerol-1-phosphate phosphohydrolase involved in glycerol biosynthesis. Plays a role in osmoadaptation. This is Glycerol-1-phosphate phosphohydrolase 2 from Saccharomyces cerevisiae (strain ATCC 204508 / S288c) (Baker's yeast).